Consider the following 267-residue polypeptide: 4-hydroxy-tetrahydrodipicolinate reductase (267 aa).

NAD(+)-binding positions include glycine 8–methionine 13 and aspartate 34. Arginine 35 serves as a coordination point for NADP(+). Residues glycine 98 to threonine 100 and alanine 122 to phenylalanine 125 contribute to the NAD(+) site. Residue histidine 155 is the Proton donor/acceptor of the active site. Histidine 156 contributes to the (S)-2,3,4,5-tetrahydrodipicolinate binding site. Residue lysine 159 is the Proton donor of the active site. Position 165 to 166 (glycine 165 to threonine 166) interacts with (S)-2,3,4,5-tetrahydrodipicolinate.

It belongs to the DapB family.

It is found in the cytoplasm. The catalysed reaction is (S)-2,3,4,5-tetrahydrodipicolinate + NAD(+) + H2O = (2S,4S)-4-hydroxy-2,3,4,5-tetrahydrodipicolinate + NADH + H(+). It carries out the reaction (S)-2,3,4,5-tetrahydrodipicolinate + NADP(+) + H2O = (2S,4S)-4-hydroxy-2,3,4,5-tetrahydrodipicolinate + NADPH + H(+). It functions in the pathway amino-acid biosynthesis; L-lysine biosynthesis via DAP pathway; (S)-tetrahydrodipicolinate from L-aspartate: step 4/4. Catalyzes the conversion of 4-hydroxy-tetrahydrodipicolinate (HTPA) to tetrahydrodipicolinate. This chain is 4-hydroxy-tetrahydrodipicolinate reductase, found in Pseudomonas putida (strain ATCC 700007 / DSM 6899 / JCM 31910 / BCRC 17059 / LMG 24140 / F1).